The primary structure comprises 36 residues: Cytochrome b6-f complex subunit 7 (36 aa).

A helical membrane pass occupies residues 5 to 25 (IFFVAGLVFVLTLVGMAIGFG).

The protein belongs to the PetM family. As to quaternary structure, the 4 large subunits of the cytochrome b6-f complex are cytochrome b6, subunit IV (17 kDa polypeptide, PetD), cytochrome f and the Rieske protein, while the 4 small subunits are PetG, PetL, PetM and PetN. The complex functions as a dimer.

Its subcellular location is the cell inner membrane. Functionally, component of the cytochrome b6-f complex, which mediates electron transfer between photosystem II (PSII) and photosystem I (PSI), cyclic electron flow around PSI, and state transitions. The chain is Cytochrome b6-f complex subunit 7 from Gloeobacter violaceus (strain ATCC 29082 / PCC 7421).